A 148-amino-acid chain; its full sequence is uncharacterized protein (148 aa).

Belongs to the SufE family.

This is an uncharacterized protein from Rhizobium etli (strain ATCC 51251 / DSM 11541 / JCM 21823 / NBRC 15573 / CFN 42).